The following is a 578-amino-acid chain: MSPKALNVRVTTMDAELEFAIQSTTTGKQLFDQVVKTIGLREVWFFGLQYTDSKGDSTWIKLYKKVMNQDVKKENPLQFRFRAKFYPEDVAEELIQDITLRLFYLQVKNAILTDEIYCPPETSVLLASYAVQARHGDHNKTTHTAGFLANDRLLPQRVIDQHKMSKDEWEQSIMTWWQEHRSMLREDAMMEYLKIAQDLEMYGVNYFEIRNKKGTDLWLGVDALGLNIYEQDDRLTPKIGFPWSEIRNISFSEKKFIIKPIDKKAPDFMFFAPRVRINKRILALCMGNHELYMRRRKPDTIDVQQMKAQAREEKNAKQQEREKLQLALAARERAEKKQQEYEDRLKQMQEDMERSQRDLLEAQDMIRRLEEQLKQLQAAKDELELRQKELQAMLQRLEEAKNMEAVEKLKLEEEIMAKQMEVQRIQDEVNAKDEETKRLQDEVEDARRKQVIAAEAAAALLAASTTPQHHHVAEDENENEEELTNGDAGGDVSRDLDTDEHIKDPIEDRRTLAERNERLHDQLKALKQDLAQSRDETKETANDKIHRENVRQGRDKYKTLREIRKGNTKRRVDQFENM.

In terms of domain architecture, FERM spans 1-296 (MSPKALNVRV…GNHELYMRRR (296 aa)). Positions 463–555 (ASTTPQHHHV…HRENVRQGRD (93 aa)) are disordered. Positions 475–484 (DENENEEELT) are enriched in acidic residues. Residues 492 to 555 (VSRDLDTDEH…HRENVRQGRD (64 aa)) are compositionally biased toward basic and acidic residues. At T559 the chain carries Phosphothreonine.

Interacts with wgn. Interacts with Mer and arm at the adherens junction. Interacts with cytoskeletal actin at apical buds of microvilli in the precellularised embryo. Interacts with PCID2 (possibly via FERM domain). In terms of processing, phosphorylated on Thr-559. In the oocyte this phosphorylation is induced by phosphatidylinositol 4,5-bisphosphate (PtdIns[4,5]P(2)) generated by sktl.

The protein localises to the cell junction. Its subcellular location is the adherens junction. It localises to the cell projection. It is found in the microvillus. The protein resides in the rhabdomere. The protein localises to the cell membrane. Its subcellular location is the cytoplasm. It localises to the cytoskeleton. It is found in the cell cortex. The protein resides in the cilium. The protein localises to the flagellum. Its subcellular location is the nucleus. It localises to the nucleoplasm. It is found in the chromosome. Involved in connections of major cytoskeletal structures to the plasma membrane. Together with wgn, involved in control of axon targeting of R8 and R2-R5 photoreceptors, independent of egr. In the nucleus, recruited to sites of active transcription by RNA polymerase II where it has a role in nuclear mRNA export together with the mRNA export factor PCID2 and other messenger ribonucleoprotein (mRNP) particles. In Drosophila melanogaster (Fruit fly), this protein is Moesin/ezrin/radixin homolog 1 (Moe).